The following is a 543-amino-acid chain: Glucose-6-phosphate isomerase (543 aa).

Catalysis depends on E353, which acts as the Proton donor. Residues H384 and K504 contribute to the active site.

It belongs to the GPI family.

The protein localises to the cytoplasm. The catalysed reaction is alpha-D-glucose 6-phosphate = beta-D-fructose 6-phosphate. It participates in carbohydrate biosynthesis; gluconeogenesis. It functions in the pathway carbohydrate degradation; glycolysis; D-glyceraldehyde 3-phosphate and glycerone phosphate from D-glucose: step 2/4. Functionally, catalyzes the reversible isomerization of glucose-6-phosphate to fructose-6-phosphate. In Roseiflexus castenholzii (strain DSM 13941 / HLO8), this protein is Glucose-6-phosphate isomerase.